Consider the following 158-residue polypeptide: Protein Smg homolog (158 aa).

It belongs to the Smg family.

This Shewanella oneidensis (strain ATCC 700550 / JCM 31522 / CIP 106686 / LMG 19005 / NCIMB 14063 / MR-1) protein is Protein Smg homolog.